We begin with the raw amino-acid sequence, 329 residues long: GTPase Obg (329 aa).

The Obg domain occupies 1–159; the sequence is MQFIDQARIT…WFLQLELKLL (159 aa). Residues 160–328 form the OBG-type G domain; that stretch reads AEVGIIGLPN…LLAQVWKELG (169 aa). Residues 166–173, 191–195, 213–216, 280–283, and 309–311 each bind ATP; these read GLPNAGKS, FTTLV, DIPG, NKQE, and SAA. Mg(2+) contacts are provided by Ser173 and Thr193.

Belongs to the TRAFAC class OBG-HflX-like GTPase superfamily. OBG GTPase family. In terms of assembly, monomer. Requires Mg(2+) as cofactor.

The protein localises to the cytoplasm. Functionally, an essential GTPase which binds GTP, GDP and possibly (p)ppGpp with moderate affinity, with high nucleotide exchange rates and a fairly low GTP hydrolysis rate. Plays a role in control of the cell cycle, stress response, ribosome biogenesis and in those bacteria that undergo differentiation, in morphogenesis control. The chain is GTPase Obg from Prochlorococcus marinus (strain MIT 9313).